We begin with the raw amino-acid sequence, 617 residues long: Chaperone protein HscA homolog (617 aa).

It belongs to the heat shock protein 70 family.

In terms of biological role, chaperone involved in the maturation of iron-sulfur cluster-containing proteins. Has a low intrinsic ATPase activity which is markedly stimulated by HscB. The chain is Chaperone protein HscA homolog from Vibrio campbellii (strain ATCC BAA-1116).